A 686-amino-acid chain; its full sequence is Disintegrin and metalloproteinase domain-containing protein 17 homolog (686 aa).

Positions 1-21 (MKIQDRSLLIFLVLGILKSDA) are cleaved as a signal peptide. Residues 22–177 (FNTRVKRHAP…RRAIAIPSDR (156 aa)) constitute a propeptide that is removed on maturation. N59, N206, and N262 each carry an N-linked (GlcNAc...) asparagine glycan. The Extracellular segment spans residues 178-637 (RKDVLNVKRN…TGGVLEFIKT (460 aa)). Residues 187-445 (NRCTLKLVAD…KWESCFQEEM (259 aa)) form the Peptidase M12B domain. Cystine bridges form between C328/C440 and C394/C424. H370 provides a ligand contact to Zn(2+). The active site involves E371. 2 residues coordinate Zn(2+): H374 and H380. The Disintegrin domain occupies 446–535 (TSFCGNGIVE…ECPSAPPVRD (90 aa)). N-linked (GlcNAc...) asparagine glycosylation occurs at N501. C506 and C527 form a disulfide bridge. The N-linked (GlcNAc...) asparagine glycan is linked to N581. A helical membrane pass occupies residues 638 to 658 (HIVVIAIIFFTLIFVGIYKIV). Over 659-686 (KYGENFTEKVTHKTAGGCRSVFVKADVN) the chain is Cytoplasmic.

Zn(2+) serves as cofactor.

It is found in the cell membrane. Functionally, metalloprotease. Acts together with protease sup-17 to facilitate lin-12/Notch signaling during developmental cell fate decision, including anchor cell/ventral uterine precursor cell decision. By modulating glp-1/Notch signaling, plays a role in germline development. The chain is Disintegrin and metalloproteinase domain-containing protein 17 homolog from Caenorhabditis elegans.